The primary structure comprises 395 residues: Protein SGT1 (395 aa).

Lysine 32 is covalently cross-linked (Glycyl lysine isopeptide (Lys-Gly) (interchain with G-Cter in ubiquitin)). Residues 137-175 (KKNKKQKDSTNKHTIKPVESIENRGDNNSSHSPISPLKI) form a disordered region. Phosphoserine is present on residues serine 168 and serine 171. In terms of domain architecture, CS spans 182–277 (SPKFKIDWYQ…IDSTQWKKLE (96 aa)). The region spanning 312–395 (SYPSSSKKKI…PPEGMEPKHW (84 aa)) is the SGS domain. Residues 373 to 395 (DWEDVSKGTVKTSPPEGMEPKHW) form a disordered region.

It belongs to the SGT1 family. Interacts with SKP1/CBF3D. Part of SCF E3 ubiquitin ligase complexes containing SKP1, CDC53, HRT1 and some F-box proteins. Interacts with CIR1/CDC35.

Its function is as follows. Involved in ubiquitination and subsequent proteasomal degradation of target proteins. Required for both entry into S phase and kinetochore function. Also involved in cyclic AMP (cAMP) pathway, possibly by participating in the assembly or the conformational activation of specific multiprotein complexes. The chain is Protein SGT1 from Saccharomyces cerevisiae (strain ATCC 204508 / S288c) (Baker's yeast).